A 383-amino-acid chain; its full sequence is Serpin B5 (383 aa).

N-linked (GlcNAc...) asparagine glycosylation is found at Asn106, Asn133, Asn176, and Asn361.

Belongs to the serpin family. Ov-serpin subfamily.

The protein localises to the secreted. It is found in the extracellular space. Its function is as follows. May not exhibit serine protease inhibitory activity. This is Serpin B5 (serpinb5) from Xenopus laevis (African clawed frog).